A 199-amino-acid chain; its full sequence is MTNITIIDTGCANLSSVKFAFDRLGYNTEITFDLNKIKSADKLILPGVGTANAAMYNLQERQLIETIQNLTQPVLGICLGMQLMTEFSEEGNVPTLNLISGKTNRIPDTGLPLPQMGWNRVQFVKNCPLFDGIVQNSHFYFVHSYAVSPNEHSVAISNYGVNFSAAIAKENFYGVQFHPERSGKNGALLLKNFVEKVPF.

Residues 3 to 199 (NITIIDTGCA…LKNFVEKVPF (197 aa)) form the Glutamine amidotransferase type-1 domain. The active-site Nucleophile is the C78. Residues H178 and E180 contribute to the active site.

As to quaternary structure, heterodimer of HisH and HisF.

Its subcellular location is the cytoplasm. It carries out the reaction 5-[(5-phospho-1-deoxy-D-ribulos-1-ylimino)methylamino]-1-(5-phospho-beta-D-ribosyl)imidazole-4-carboxamide + L-glutamine = D-erythro-1-(imidazol-4-yl)glycerol 3-phosphate + 5-amino-1-(5-phospho-beta-D-ribosyl)imidazole-4-carboxamide + L-glutamate + H(+). The enzyme catalyses L-glutamine + H2O = L-glutamate + NH4(+). It participates in amino-acid biosynthesis; L-histidine biosynthesis; L-histidine from 5-phospho-alpha-D-ribose 1-diphosphate: step 5/9. In terms of biological role, IGPS catalyzes the conversion of PRFAR and glutamine to IGP, AICAR and glutamate. The HisH subunit catalyzes the hydrolysis of glutamine to glutamate and ammonia as part of the synthesis of IGP and AICAR. The resulting ammonia molecule is channeled to the active site of HisF. In Haemophilus influenzae (strain 86-028NP), this protein is Imidazole glycerol phosphate synthase subunit HisH.